The chain runs to 131 residues: Small ribosomal subunit protein uS8 (131 aa).

This sequence belongs to the universal ribosomal protein uS8 family. As to quaternary structure, part of the 30S ribosomal subunit. Contacts proteins S5 and S12.

In terms of biological role, one of the primary rRNA binding proteins, it binds directly to 16S rRNA central domain where it helps coordinate assembly of the platform of the 30S subunit. The polypeptide is Small ribosomal subunit protein uS8 (Acidithiobacillus ferrooxidans (strain ATCC 23270 / DSM 14882 / CIP 104768 / NCIMB 8455) (Ferrobacillus ferrooxidans (strain ATCC 23270))).